We begin with the raw amino-acid sequence, 216 residues long: MASKSVVLEAREITLAIELIELGARLQLLEAETSLSRDRLVKLYKELKGVSPPKGMLPFSTDWFMTWQPNFHSSLFYNIYRFMAGHGGCRAIESIVKSYRLYLEHVQLQDDEPVLSLTRAWTLVRFFDSGMLQLSVCRRCGGQFVAHAHDPQHAFVCGLCQPPSRAGKTKKAAQTRPERQSAVAGIPAEVPQVAEARAHEARCTAPTLDTFVTAEV.

Positions 137, 140, 157, and 160 each coordinate Zn(2+).

Belongs to the FlhC family. In terms of assembly, heterohexamer composed of two FlhC and four FlhD subunits. Each FlhC binds a FlhD dimer, forming a heterotrimer, and a hexamer assembles by dimerization of two heterotrimers. The cofactor is Zn(2+).

It is found in the cytoplasm. Functions in complex with FlhD as a master transcriptional regulator that regulates transcription of several flagellar and non-flagellar operons by binding to their promoter region. Activates expression of class 2 flagellar genes, including fliA, which is a flagellum-specific sigma factor that turns on the class 3 genes. Also regulates genes whose products function in a variety of physiological pathways. The chain is Flagellar transcriptional regulator FlhC from Paraburkholderia atlantica.